The chain runs to 193 residues: Hydroxyacylglutathione hydrolase-like protein (193 aa).

Zn(2+)-binding residues include His54, His56, Asp58, His59, and His110.

Belongs to the metallo-beta-lactamase superfamily. Glyoxalase II family. The cofactor is Zn(2+).

Functionally, hydrolase acting on ester bonds. The polypeptide is Hydroxyacylglutathione hydrolase-like protein (HAGHL) (Bos taurus (Bovine)).